Here is a 521-residue protein sequence, read N- to C-terminus: Type II methyltransferase M.AluI (521 aa).

The SAM-dependent MTase C5-type domain occupies 8–491; the sequence is YSFVDLFAGI…REHVRRDRAL (484 aa). The active site involves cysteine 84.

This sequence belongs to the class I-like SAM-binding methyltransferase superfamily. C5-methyltransferase family.

The enzyme catalyses a 2'-deoxycytidine in DNA + S-adenosyl-L-methionine = a 5-methyl-2'-deoxycytidine in DNA + S-adenosyl-L-homocysteine + H(+). In terms of biological role, a methylase, recognizes the double-stranded sequence 5'-AGCT-3', methylates C-3 on both strands, and protects the DNA from cleavage by the AluI endonuclease. This is Type II methyltransferase M.AluI from Cellulosimicrobium cellulans (Arthrobacter luteus).